A 540-amino-acid polypeptide reads, in one-letter code: DM7 family protein GM11956 (540 aa).

The tract at residues 416–443 (ATDTRGRDEIRTSCDQPQEKDEGSAEAD) is disordered. A compositionally biased stretch (basic and acidic residues) spans 417–443 (TDTRGRDEIRTSCDQPQEKDEGSAEAD).

Belongs to the DM7 family.

The chain is DM7 family protein GM11956 from Drosophila sechellia (Fruit fly).